Reading from the N-terminus, the 48-residue chain is uncharacterized protein (48 aa).

The disordered stretch occupies residues 1–48; sequence MSRRMGGGMPKINLSGAIPNNNTSTPSTPTLRSSVSVSSSNSRGLFLA. Low complexity predominate over residues 20 to 48; the sequence is NNNTSTPSTPTLRSSVSVSSSNSRGLFLA.

This is an uncharacterized protein from Dictyostelium discoideum (Social amoeba).